Consider the following 236-residue polypeptide: Putative (5-formylfuran-3-yl)methyl phosphate synthase (236 aa).

K38 serves as the catalytic Schiff-base intermediate with substrate. K94 acts as the Proton acceptor in catalysis.

This sequence belongs to the MfnB family.

The catalysed reaction is 2 D-glyceraldehyde 3-phosphate = 4-(hydroxymethyl)-2-furancarboxaldehyde phosphate + phosphate + 2 H2O. In terms of biological role, catalyzes the formation of 4-(hydroxymethyl)-2-furancarboxaldehyde phosphate (4-HFC-P) from two molecules of glyceraldehyde-3-P (GA-3-P). The sequence is that of Putative (5-formylfuran-3-yl)methyl phosphate synthase from Methylorubrum extorquens (Methylobacterium dichloromethanicum).